The sequence spans 334 residues: Ornithine carbamoyltransferase (334 aa).

Residues 57–60 (STRT), glutamine 84, arginine 108, and 135–138 (HPTQ) contribute to the carbamoyl phosphate site. L-ornithine contacts are provided by residues asparagine 168, aspartate 233, and 237–238 (SM). Residues 275–276 (CL) and arginine 320 contribute to the carbamoyl phosphate site.

This sequence belongs to the aspartate/ornithine carbamoyltransferase superfamily. OTCase family.

It localises to the cytoplasm. It carries out the reaction carbamoyl phosphate + L-ornithine = L-citrulline + phosphate + H(+). Its pathway is amino-acid biosynthesis; L-arginine biosynthesis; L-arginine from L-ornithine and carbamoyl phosphate: step 1/3. Its function is as follows. Reversibly catalyzes the transfer of the carbamoyl group from carbamoyl phosphate (CP) to the N(epsilon) atom of ornithine (ORN) to produce L-citrulline. This Thermobifida fusca (strain YX) protein is Ornithine carbamoyltransferase.